Reading from the N-terminus, the 278-residue chain is HTH-type transcriptional activator RhaS (278 aa).

The HTH araC/xylS-type domain maps to 174–272 (NLLLAWLEDH…NWSPRDIRQG (99 aa)). 2 consecutive DNA-binding regions (H-T-H motif) follow at residues 191–212 (DAVA…KQQT) and 239–262 (VTDI…RREF).

Binds DNA as a dimer.

The protein localises to the cytoplasm. Its function is as follows. Activates expression of the rhaBAD and rhaT operons. The sequence is that of HTH-type transcriptional activator RhaS from Escherichia coli O6:H1 (strain CFT073 / ATCC 700928 / UPEC).